A 108-amino-acid chain; its full sequence is Long neurotoxin 43 (108 aa).

The signal sequence occupies residues Met-1–Thr-21. Disulfide bonds link Cys-24–Cys-42, Cys-35–Cys-63, Cys-48–Cys-52, Cys-67–Cys-78, and Cys-79–Cys-84.

This sequence belongs to the three-finger toxin family. Long-chain subfamily. Type II alpha-neurotoxin sub-subfamily. Expressed by the venom gland.

The protein resides in the secreted. Its function is as follows. Binds with high affinity to muscular (alpha-1/CHRNA1) and neuronal (alpha-7/CHRNA7) nicotinic acetylcholine receptor (nAChR) and inhibits acetylcholine from binding to the receptor, thereby impairing neuromuscular and neuronal transmission. The polypeptide is Long neurotoxin 43 (Drysdalia coronoides (White-lipped snake)).